Consider the following 558-residue polypeptide: Glucose-6-phosphate isomerase (558 aa).

N-acetylalanine is present on alanine 2. N6-acetyllysine is present on lysine 12. At lysine 34 the chain carries N6-(2-hydroxyisobutyryl)lysine. The residue at position 107 (serine 107) is a Phosphoserine. A Phosphothreonine modification is found at threonine 109. Residue lysine 142 is modified to N6-acetyllysine. Residue 159–160 coordinates D-glucose 6-phosphate; that stretch reads GS. A Phosphoserine; by CK2 modification is found at serine 185. A D-glucose 6-phosphate-binding site is contributed by 210–215; that stretch reads SKTFTT. Threonine 250 bears the Phosphothreonine mark. The D-glucose 6-phosphate site is built by glutamine 354, glutamate 358, and histidine 389. The active-site Proton donor is glutamate 358. Residue histidine 389 is part of the active site. N6-acetyllysine; alternate is present on lysine 454. The residue at position 454 (lysine 454) is an N6-malonyllysine; alternate. Lysine 454 bears the N6-succinyllysine; alternate mark. Residue serine 455 is modified to Phosphoserine. Lysine 519 is a D-glucose 6-phosphate binding site. Lysine 519 is an active-site residue.

This sequence belongs to the GPI family. In terms of assembly, homodimer; in the catalytically active form. Monomer in the secreted form. Phosphorylation at Ser-185 by CK2 has been shown to decrease enzymatic activity and may contribute to secretion by a non-classical secretory pathway. In terms of processing, ISGylated.

The protein resides in the cytoplasm. It localises to the secreted. It catalyses the reaction alpha-D-glucose 6-phosphate = beta-D-fructose 6-phosphate. It functions in the pathway carbohydrate degradation; glycolysis; D-glyceraldehyde 3-phosphate and glycerone phosphate from D-glucose: step 2/4. In terms of biological role, in the cytoplasm, catalyzes the conversion of glucose-6-phosphate to fructose-6-phosphate, the second step in glycolysis, and the reverse reaction during gluconeogenesis. Besides it's role as a glycolytic enzyme, also acts as a secreted cytokine: acts as an angiogenic factor (AMF) that stimulates endothelial cell motility. Acts as a neurotrophic factor, neuroleukin, for spinal and sensory neurons. It is secreted by lectin-stimulated T-cells and induces immunoglobulin secretion. This chain is Glucose-6-phosphate isomerase, found in Pongo abelii (Sumatran orangutan).